Here is a 469-residue protein sequence, read N- to C-terminus: tRNA(Ile)-lysidine synthase (469 aa).

S26 to S31 is an ATP binding site.

Belongs to the tRNA(Ile)-lysidine synthase family.

It is found in the cytoplasm. The enzyme catalyses cytidine(34) in tRNA(Ile2) + L-lysine + ATP = lysidine(34) in tRNA(Ile2) + AMP + diphosphate + H(+). Ligates lysine onto the cytidine present at position 34 of the AUA codon-specific tRNA(Ile) that contains the anticodon CAU, in an ATP-dependent manner. Cytidine is converted to lysidine, thus changing the amino acid specificity of the tRNA from methionine to isoleucine. The sequence is that of tRNA(Ile)-lysidine synthase from Clostridium perfringens (strain 13 / Type A).